The primary structure comprises 388 residues: Oxytocin receptor (388 aa).

The Extracellular segment spans residues 1-38; sequence MEGTPAANWSIELDLGSGVPPGAEGNLTAGPPRRNEAL. Asparagine 8 and asparagine 26 each carry an N-linked (GlcNAc...) asparagine glycan. The helical transmembrane segment at 39 to 63 threads the bilayer; it reads ARVEVAVLCLILFLALSGNACVLLA. Topologically, residues 64–74 are cytoplasmic; that stretch reads LRTTRHKHSRL. A helical membrane pass occupies residues 75–97; the sequence is FFFMKHLSIADLVVAVFQVLPQL. Residues 98–113 are Extracellular-facing; that stretch reads LWDITFRFYGPDLLCR. A disulfide bond links cysteine 112 and cysteine 187. A helical membrane pass occupies residues 114–135; it reads LVKYLQVVGMFASTYLLLLMSL. The Cytoplasmic segment spans residues 136–154; that stretch reads DRCLAICQPLRSLRRRTDR. A helical membrane pass occupies residues 155-175; it reads LAVLATWLGCLVASVPQVHIF. Over 176–202 the chain is Extracellular; it reads SLREVADGVFDCWAVFIQPWGPKAYVT. The helical transmembrane segment at 203-225 threads the bilayer; it reads WITLAVYIVPVIVLAACYGLISF. Topologically, residues 226 to 274 are cytoplasmic; it reads KIWQNLRLKTAAAAAAAEGSDAAGGAGRAALARVSSVKLISKAKIRTVK. The helical transmembrane segment at 275 to 293 threads the bilayer; it reads MTFIIVLAFIVCWTPFFFV. Topologically, residues 294 to 308 are extracellular; the sequence is QMWSVWDVNAPKEAS. A helical membrane pass occupies residues 309-331; the sequence is AFIIAMLLASLNSCCNPWIYMLF. The Cytoplasmic portion of the chain corresponds to 332-388; that stretch reads TGHLFHELVQRFLCCSARYLKGSRPGETSISKKSNSSTFVLSRRSSSQRSCSQPSSA. Residues 354–388 are disordered; the sequence is SRPGETSISKKSNSSTFVLSRRSSSQRSCSQPSSA. 2 positions are modified to phosphoserine: serine 365 and serine 367. The span at 365 to 388 shows a compositional bias: low complexity; sequence SNSSTFVLSRRSSSQRSCSQPSSA.

It belongs to the G-protein coupled receptor 1 family. Vasopressin/oxytocin receptor subfamily.

It is found in the cell membrane. In terms of biological role, receptor for oxytocin. The activity of this receptor is mediated by G proteins which activate a phosphatidylinositol-calcium second messenger system. This chain is Oxytocin receptor (Oxtr), found in Mus musculus (Mouse).